We begin with the raw amino-acid sequence, 101 residues long: Small ribosomal subunit protein bS6 (101 aa).

Belongs to the bacterial ribosomal protein bS6 family.

Functionally, binds together with bS18 to 16S ribosomal RNA. In Paenarthrobacter aurescens (strain TC1), this protein is Small ribosomal subunit protein bS6.